An 81-amino-acid chain; its full sequence is uncharacterized protein (81 aa).

The next 2 membrane-spanning stretches (helical) occupy residues 27–47 (ASLL…LNLT) and 54–74 (IFGA…IFIM).

Its subcellular location is the cell membrane. This is an uncharacterized protein from Bacillus subtilis (strain 168).